Reading from the N-terminus, the 115-residue chain is Thiosulfate:glutathione sulfurtransferase (115 aa).

Residues 17–115 (ASGRARLFDV…AYREWLEKES (99 aa)) form the Rhodanese domain. C79 functions as the Cysteine persulfide intermediate in the catalytic mechanism.

As to expression, highly expressed in kidney, liver and skeletal muscle. Lower levels of expression in heart, colon, thymus, spleen, placenta and lung. Weakly expressed in brain, small intestine and peripheral blood leukocytes. Expressed at high levels in the breast carcinoma cell lines MCF-7 and MDA-MB-468 and at a lower level in the breast carcinoma cell line MDA-MB-231, the colon carcinoma call line LoVo and the lung carcinoma cell line A-549. No expression in the cell lines EFO-27 and HeLa, or the normal breast tissue cell lines MCF-10A and H184A1. Detected in invasive ductal carcinoma, but not in the adjacent tissues.

The protein localises to the cytoplasm. Its subcellular location is the perinuclear region. It catalyses the reaction thiosulfate + glutathione = S-sulfanylglutathione + sulfite + H(+). The catalysed reaction is thiosulfate + 2 glutathione = glutathione disulfide + hydrogen sulfide + sulfite + 2 H(+). GSS(-) is a potent inhibitor of TSTD1, since the presence of the sulfur dioxygenase (SDO) strongly increases the TSTD1 catalytic activity. Thiosulfate:glutathione sulfurtransferase (TST) required to produce S-sulfanylglutathione (GSS(-)), a central intermediate in hydrogen sulfide metabolism. Provides the link between the first step in mammalian H(2)S metabolism performed by the sulfide:quinone oxidoreductase (SQOR) which catalyzes the conversion of H(2)S to thiosulfate, and the sulfur dioxygenase (SDO) which uses GSS(-) as substrate. The thermodynamic coupling of the irreversible SDO and reversible TST reactions provides a model for the physiologically relevant reaction with thiosulfate as the sulfane donor. GSS(-) spontaneously reacts with glutathione to form glutathione disulfide. The protein is Thiosulfate:glutathione sulfurtransferase (TSTD1) of Homo sapiens (Human).